Reading from the N-terminus, the 111-residue chain is Nucleoid-associated protein PputGB1_3833 (111 aa).

Disordered stretches follow at residues 1-25 (MMKG…KMQE) and 87-111 (EQSS…KMPF).

Belongs to the YbaB/EbfC family. Homodimer.

Its subcellular location is the cytoplasm. The protein localises to the nucleoid. Its function is as follows. Binds to DNA and alters its conformation. May be involved in regulation of gene expression, nucleoid organization and DNA protection. The chain is Nucleoid-associated protein PputGB1_3833 from Pseudomonas putida (strain GB-1).